Reading from the N-terminus, the 380-residue chain is Septin homolog spn4 (380 aa).

The region spanning 25 to 298 is the Septin-type G domain; sequence NGVAFTLMLC…EQYRQEQMKV (274 aa). Residues 35 to 42 form a G1 motif region; it reads GESGLGKT. GTP contacts are provided by residues 35-42, T70, G96, 175-183, G231, and R247; these read GESGLGKT and KADMYTRRD. The tract at residues 93-96 is G3 motif; that stretch reads DTPG. The G4 motif stretch occupies residues 174 to 177; sequence AKAD.

The protein belongs to the TRAFAC class TrmE-Era-EngA-EngB-Septin-like GTPase superfamily. Septin GTPase family. As to quaternary structure, component of the septin complex composed of two copies of each spn1, spn2, spn3 and spn4.

It localises to the cytoplasm. The protein resides in the cell cortex. Plays a role in the cell cycle. Involved in a late stage of septum formation leading to the separation of the daughter cells. This chain is Septin homolog spn4 (spn4), found in Schizosaccharomyces pombe (strain 972 / ATCC 24843) (Fission yeast).